The following is a 115-amino-acid chain: MVKQVIVCRKLDIGKGKLCAQVAHASLDAALKVYRNNKELFDRWYREGAKKVVLKVNSLEELLDIAKKAMEKGIVVSIIRDAGKTQVSPGTIICIALGPDEDEKIDQITGNLKLY.

Belongs to the PTH2 family.

The protein localises to the cytoplasm. The enzyme catalyses an N-acyl-L-alpha-aminoacyl-tRNA + H2O = an N-acyl-L-amino acid + a tRNA + H(+). The natural substrate for this enzyme may be peptidyl-tRNAs which drop off the ribosome during protein synthesis. The polypeptide is Peptidyl-tRNA hydrolase (pth) (Nanoarchaeum equitans (strain Kin4-M)).